Here is a 377-residue protein sequence, read N- to C-terminus: tRNA(Met) cytidine acetate ligase (377 aa).

ATP is bound by residues 7 to 20 (ITEY…HLYH), G101, N152, and R179.

The protein belongs to the TmcAL family.

The protein resides in the cytoplasm. It carries out the reaction cytidine(34) in elongator tRNA(Met) + acetate + ATP = N(4)-acetylcytidine(34) in elongator tRNA(Met) + AMP + diphosphate. Its function is as follows. Catalyzes the formation of N(4)-acetylcytidine (ac(4)C) at the wobble position of elongator tRNA(Met), using acetate and ATP as substrates. First activates an acetate ion to form acetyladenylate (Ac-AMP) and then transfers the acetyl group to tRNA to form ac(4)C34. The sequence is that of tRNA(Met) cytidine acetate ligase from Oenococcus oeni (strain ATCC BAA-331 / PSU-1).